Here is a 279-residue protein sequence, read N- to C-terminus: 5'-nucleotidase SurE (279 aa).

A divalent metal cation contacts are provided by aspartate 28, aspartate 29, serine 59, and asparagine 113.

This sequence belongs to the SurE nucleotidase family. A divalent metal cation is required as a cofactor.

The protein localises to the cytoplasm. It carries out the reaction a ribonucleoside 5'-phosphate + H2O = a ribonucleoside + phosphate. In terms of biological role, nucleotidase that shows phosphatase activity on nucleoside 5'-monophosphates. The sequence is that of 5'-nucleotidase SurE from Methanospirillum hungatei JF-1 (strain ATCC 27890 / DSM 864 / NBRC 100397 / JF-1).